Here is a 349-residue protein sequence, read N- to C-terminus: MAAITNNPDKEKALGLVLNQIERNFGKGSIMRLGDAARMKVETISTGALTLDLALGGGLPMGRVVEIYGPESSGKTTLALHAIAEVQKAGGVAAFVDAEHALDPTYSAALGVDINNLLVAQPDTGESALEIVDQLVRSAAVDVVVIDSVAALVPRAEIEGEMGDTQVGLQARLMSKALRKIAGNIGKSGCVVIFLNQLRQKIGITYGSPEVTTGGTALKFYASVRLDIRRIQTLKKGSEGEYGIRAKVKVAKNKVAPPFRIAEFDIIFGQGISRMGCMLDLAEQSDVVLRKGAWYSYNGDNISQGRDNAVKYLEENPKIAETIEQQVREKLELGSLSFAISQGDGEEEE.

69–76 (GPESSGKT) is a binding site for ATP.

The protein belongs to the RecA family.

The protein resides in the cytoplasm. Functionally, can catalyze the hydrolysis of ATP in the presence of single-stranded DNA, the ATP-dependent uptake of single-stranded DNA by duplex DNA, and the ATP-dependent hybridization of homologous single-stranded DNAs. It interacts with LexA causing its activation and leading to its autocatalytic cleavage. This is Protein RecA from Crocosphaera subtropica (strain ATCC 51142 / BH68) (Cyanothece sp. (strain ATCC 51142)).